A 374-amino-acid polypeptide reads, in one-letter code: Ribosomal RNA large subunit methyltransferase G (374 aa).

The protein belongs to the methyltransferase superfamily. RlmG family.

It localises to the cytoplasm. The catalysed reaction is guanosine(1835) in 23S rRNA + S-adenosyl-L-methionine = N(2)-methylguanosine(1835) in 23S rRNA + S-adenosyl-L-homocysteine + H(+). In terms of biological role, specifically methylates the guanine in position 1835 (m2G1835) of 23S rRNA. This chain is Ribosomal RNA large subunit methyltransferase G, found in Pseudomonas syringae pv. syringae (strain B728a).